A 210-amino-acid chain; its full sequence is MNKQPALAQEQYACVYAWLALLFFREVDDEGLIQLQSAEIADWLALLKRQPALAASVALLEQKIAALSLRQDAQLELAADFCGLFLMTDKKSALPYASQYPQQEPGMIKHLLLEAGMEVNDDFKEPTDHLAIYLELLSHLHFSLGESFQQRRMNKLRQKTLSSLLEWLPEFTNNCFKHDSYGFYAALSQLLLAIVRFDDGKEDLSIVAAE.

This sequence belongs to the TorD/DmsD family. TorD subfamily.

The protein localises to the cytoplasm. In terms of biological role, involved in the biogenesis of TorA. Acts on TorA before the insertion of the molybdenum cofactor and, as a result, probably favors a conformation of the apoenzyme that is competent for acquiring the cofactor. The sequence is that of Chaperone protein TorD from Salmonella schwarzengrund (strain CVM19633).